We begin with the raw amino-acid sequence, 788 residues long: Ribonucleoside-diphosphate reductase large subunit (788 aa).

The ATP-cone domain occupies 7–98; the sequence is TYVVKRDGRK…VSNLHKKTNK (92 aa). ATP contacts are provided by residues 11-12, 17-23, T59, and D63; these read KR and EDVHFDK. Residues S208 and S223 each coordinate GDP. Cysteines 224 and 450 form a disulfide. Residues 232-234, K249, R262, and 269-270 each bind dTTP; these read DSI and AG. GDP is bound at residue N433. Residue N433 is the Proton acceptor of the active site. C435 (cysteine radical intermediate) is an active-site residue. Residues E437 and 610–613 contribute to the GDP site; that span reads TAST. E437 acts as the Proton acceptor in catalysis.

It belongs to the ribonucleoside diphosphate reductase large chain family. In terms of assembly, heterodimer of a large and a small subunit.

The enzyme catalyses a 2'-deoxyribonucleoside 5'-diphosphate + [thioredoxin]-disulfide + H2O = a ribonucleoside 5'-diphosphate + [thioredoxin]-dithiol. With respect to regulation, under complex allosteric control mediated by deoxynucleoside triphosphates and ATP binding to separate specificity and activation sites on the large subunit. The type of nucleotide bound at the specificity site determines substrate preference. It seems probable that ATP makes the enzyme reduce CDP and UDP, dGTP favors ADP reduction and dTTP favors GDP reduction. Stimulated by ATP and inhibited by dATP binding to the activity site. Functionally, provides the precursors necessary for DNA synthesis. Catalyzes the biosynthesis of deoxyribonucleotides from the corresponding ribonucleotides. This chain is Ribonucleoside-diphosphate reductase large subunit (rnr-1), found in Caenorhabditis elegans.